We begin with the raw amino-acid sequence, 218 residues long: Large ribosomal subunit protein uL3 (218 aa).

The interval 137-157 (GVGASHGAHKNHRKPGSIGGA) is disordered.

Belongs to the universal ribosomal protein uL3 family. As to quaternary structure, part of the 50S ribosomal subunit. Forms a cluster with proteins L14 and L19.

Functionally, one of the primary rRNA binding proteins, it binds directly near the 3'-end of the 23S rRNA, where it nucleates assembly of the 50S subunit. In Kocuria rhizophila (strain ATCC 9341 / DSM 348 / NBRC 103217 / DC2201), this protein is Large ribosomal subunit protein uL3.